The chain runs to 394 residues: MTRLETRTEPMVLNMGPHHPSMHGVLRLIMTLDGEDVVDCEPVIGYLHRGMEKIAENRTNVMYVPYVSRWDYAAGMFNEAVTVNAPEKLAGVAVPKRASYIRVIMLELNRIANHLLWFGPFLADVGAQTPFFYQFREREMIYDLWEAATGYRMVNNNYFRVGGVAADLPYGWVDKCLEFCDYLLPKVDEYERLVTDNPIFRRRVEGIGTITREEAINWGLSGPMLRASGVQWDLRKVDHYECYDDFDWDVQWETAGDCFARYVVRMREMRESVKIIRQAIKGLPGGPYENLEAKRLAAGKKSEWDAFDYQFIGKKVSPTFKIPKGEIYARVESGKGELGIYLVGDDNVFPARWKIRAADFNNLQIVPHLLRGMKVADIVVILGSVDVIMGSVDR.

Belongs to the complex I 49 kDa subunit family. In terms of assembly, NDH-1 can be composed of about 15 different subunits; different subcomplexes with different compositions have been identified which probably have different functions.

It is found in the cellular thylakoid membrane. It carries out the reaction a plastoquinone + NADH + (n+1) H(+)(in) = a plastoquinol + NAD(+) + n H(+)(out). The catalysed reaction is a plastoquinone + NADPH + (n+1) H(+)(in) = a plastoquinol + NADP(+) + n H(+)(out). Functionally, NDH-1 shuttles electrons from an unknown electron donor, via FMN and iron-sulfur (Fe-S) centers, to quinones in the respiratory and/or the photosynthetic chain. The immediate electron acceptor for the enzyme in this species is believed to be plastoquinone. Couples the redox reaction to proton translocation, and thus conserves the redox energy in a proton gradient. Cyanobacterial NDH-1 also plays a role in inorganic carbon-concentration. This chain is NAD(P)H-quinone oxidoreductase subunit H, found in Nostoc punctiforme (strain ATCC 29133 / PCC 73102).